The following is a 291-amino-acid chain: ATP synthase gamma chain (291 aa).

This sequence belongs to the ATPase gamma chain family. As to quaternary structure, F-type ATPases have 2 components, CF(1) - the catalytic core - and CF(0) - the membrane proton channel. CF(1) has five subunits: alpha(3), beta(3), gamma(1), delta(1), epsilon(1). CF(0) has three main subunits: a, b and c.

The protein localises to the cell inner membrane. Functionally, produces ATP from ADP in the presence of a proton gradient across the membrane. The gamma chain is believed to be important in regulating ATPase activity and the flow of protons through the CF(0) complex. This is ATP synthase gamma chain from Neisseria meningitidis serogroup C (strain 053442).